A 337-amino-acid polypeptide reads, in one-letter code: NADH-quinone oxidoreductase subunit H (337 aa).

The next 9 helical transmembrane spans lie at 9-29 (GIPLAIIAAQSLALIVALLLV), 50-70 (PNVVGAFGLLQSFADLLKFVF), 82-102 (GIFLLAPLVTVVLALSGWAVI), 115-135 (VGILYIFAISSLGVYGVIMAG), 161-181 (IGFVIVCVLMTAGSLNLTAIV), 186-206 (TIWYFIPHLPMFVIFFISALA), 245-265 (SILLMCAMTTILFLGGWLPPI), 273-293 (VPGVIWFLLKVFLVFFMFAMV), and 313-333 (FLPISLFWVVLTAGVLVGFDI).

This sequence belongs to the complex I subunit 1 family. NDH-1 is composed of 14 different subunits. Subunits NuoA, H, J, K, L, M, N constitute the membrane sector of the complex.

The protein resides in the cell inner membrane. It catalyses the reaction a quinone + NADH + 5 H(+)(in) = a quinol + NAD(+) + 4 H(+)(out). NDH-1 shuttles electrons from NADH, via FMN and iron-sulfur (Fe-S) centers, to quinones in the respiratory chain. The immediate electron acceptor for the enzyme in this species is believed to be ubiquinone. Couples the redox reaction to proton translocation (for every two electrons transferred, four hydrogen ions are translocated across the cytoplasmic membrane), and thus conserves the redox energy in a proton gradient. This subunit may bind ubiquinone. The protein is NADH-quinone oxidoreductase subunit H of Parvibaculum lavamentivorans (strain DS-1 / DSM 13023 / NCIMB 13966).